The primary structure comprises 227 residues: Cytochrome c oxidase subunit 2 (227 aa).

Residues 1 to 14 (MAYPFQLGLQDATS) are Mitochondrial intermembrane-facing. The helical transmembrane segment at 15-45 (PIMEELTNFHDHTLMIVFLISSLVLYLISLM) threads the bilayer. The Mitochondrial matrix portion of the chain corresponds to 46-59 (LTTKLIHTNTMDAQ). The chain crosses the membrane as a helical span at residues 60–87 (EVETVWTILPAIILIMIALPSLRILYLM). Topologically, residues 88 to 227 (DEINNPVLTV…LFENWSTSMI (140 aa)) are mitochondrial intermembrane. His161, Cys196, Glu198, Cys200, His204, and Met207 together coordinate Cu cation. Mg(2+) is bound at residue Glu198.

Belongs to the cytochrome c oxidase subunit 2 family. Component of the cytochrome c oxidase (complex IV, CIV), a multisubunit enzyme composed of 14 subunits. The complex is composed of a catalytic core of 3 subunits MT-CO1, MT-CO2 and MT-CO3, encoded in the mitochondrial DNA, and 11 supernumerary subunits COX4I, COX5A, COX5B, COX6A, COX6B, COX6C, COX7A, COX7B, COX7C, COX8 and NDUFA4, which are encoded in the nuclear genome. The complex exists as a monomer or a dimer and forms supercomplexes (SCs) in the inner mitochondrial membrane with NADH-ubiquinone oxidoreductase (complex I, CI) and ubiquinol-cytochrome c oxidoreductase (cytochrome b-c1 complex, complex III, CIII), resulting in different assemblies (supercomplex SCI(1)III(2)IV(1) and megacomplex MCI(2)III(2)IV(2)). Found in a complex with TMEM177, COA6, COX18, COX20, SCO1 and SCO2. Interacts with TMEM177 in a COX20-dependent manner. Interacts with COX20. Interacts with COX16. Cu cation serves as cofactor.

The protein resides in the mitochondrion inner membrane. The enzyme catalyses 4 Fe(II)-[cytochrome c] + O2 + 8 H(+)(in) = 4 Fe(III)-[cytochrome c] + 2 H2O + 4 H(+)(out). In terms of biological role, component of the cytochrome c oxidase, the last enzyme in the mitochondrial electron transport chain which drives oxidative phosphorylation. The respiratory chain contains 3 multisubunit complexes succinate dehydrogenase (complex II, CII), ubiquinol-cytochrome c oxidoreductase (cytochrome b-c1 complex, complex III, CIII) and cytochrome c oxidase (complex IV, CIV), that cooperate to transfer electrons derived from NADH and succinate to molecular oxygen, creating an electrochemical gradient over the inner membrane that drives transmembrane transport and the ATP synthase. Cytochrome c oxidase is the component of the respiratory chain that catalyzes the reduction of oxygen to water. Electrons originating from reduced cytochrome c in the intermembrane space (IMS) are transferred via the dinuclear copper A center (CU(A)) of subunit 2 and heme A of subunit 1 to the active site in subunit 1, a binuclear center (BNC) formed by heme A3 and copper B (CU(B)). The BNC reduces molecular oxygen to 2 water molecules using 4 electrons from cytochrome c in the IMS and 4 protons from the mitochondrial matrix. The sequence is that of Cytochrome c oxidase subunit 2 (MT-CO2) from Gerbillurus vallinus (Brush-tailed hairy-footed gerbil).